The primary structure comprises 69 residues: Sodium channel toxin (69 aa).

The 65-residue stretch at 2–66 (KNDYPVDTAK…SPTKTSGRCN (65 aa)) folds into the LCN-type CS-alpha/beta domain. Cystine bridges form between Cys-14-Cys-65, Cys-18-Cys-41, Cys-27-Cys-48, and Cys-31-Cys-50.

Belongs to the long (4 C-C) scorpion toxin superfamily. Sodium channel inhibitor family. As to expression, expressed by the venom gland.

The protein localises to the secreted. Its function is as follows. Inhibits voltage-gated sodium channels (Nav). The chain is Sodium channel toxin from Tityus metuendus (Scorpion).